A 1342-amino-acid chain; its full sequence is DNA-directed RNA polymerase subunit beta (1342 aa).

This sequence belongs to the RNA polymerase beta chain family. The RNAP catalytic core consists of 2 alpha, 1 beta, 1 beta' and 1 omega subunit. When a sigma factor is associated with the core the holoenzyme is formed, which can initiate transcription.

It carries out the reaction RNA(n) + a ribonucleoside 5'-triphosphate = RNA(n+1) + diphosphate. Functionally, DNA-dependent RNA polymerase catalyzes the transcription of DNA into RNA using the four ribonucleoside triphosphates as substrates. The chain is DNA-directed RNA polymerase subunit beta from Glaesserella parasuis serovar 5 (strain SH0165) (Haemophilus parasuis).